The following is a 379-amino-acid chain: Homoserine O-succinyltransferase (379 aa).

The 310-residue stretch at 51-360 (NAVLICHALS…DAPQGHDAFL (310 aa)) folds into the AB hydrolase-1 domain. The active-site Nucleophile is serine 157. Arginine 227 lines the substrate pocket. Residues aspartate 323 and histidine 356 contribute to the active site. Residue aspartate 357 coordinates substrate.

This sequence belongs to the AB hydrolase superfamily. MetX family. In terms of assembly, homodimer.

The protein localises to the cytoplasm. It carries out the reaction L-homoserine + succinyl-CoA = O-succinyl-L-homoserine + CoA. It functions in the pathway amino-acid biosynthesis; L-methionine biosynthesis via de novo pathway; O-succinyl-L-homoserine from L-homoserine: step 1/1. Its function is as follows. Transfers a succinyl group from succinyl-CoA to L-homoserine, forming succinyl-L-homoserine. This Pseudomonas savastanoi pv. phaseolicola (strain 1448A / Race 6) (Pseudomonas syringae pv. phaseolicola (strain 1448A / Race 6)) protein is Homoserine O-succinyltransferase.